A 131-amino-acid chain; its full sequence is Small ribosomal subunit protein uS9 (131 aa).

Belongs to the universal ribosomal protein uS9 family.

The polypeptide is Small ribosomal subunit protein uS9 (Mesoplasma florum (strain ATCC 33453 / NBRC 100688 / NCTC 11704 / L1) (Acholeplasma florum)).